Reading from the N-terminus, the 334-residue chain is Mevalonate kinase (334 aa).

110–120 (PVGAGLGSSAA) is an ATP binding site. D161 serves as the catalytic Proton acceptor.

This sequence belongs to the GHMP kinase family. Mevalonate kinase subfamily. In terms of assembly, homodimer. Mg(2+) is required as a cofactor.

The protein resides in the cytoplasm. The catalysed reaction is (R)-mevalonate + ATP = (R)-5-phosphomevalonate + ADP + H(+). Its pathway is isoprenoid biosynthesis; isopentenyl diphosphate biosynthesis via mevalonate pathway; isopentenyl diphosphate from (R)-mevalonate: step 1/3. In terms of biological role, catalyzes the phosphorylation of (R)-mevalonate (MVA) to (R)-mevalonate 5-phosphate (MVAP). Functions in the mevalonate (MVA) pathway leading to isopentenyl diphosphate (IPP), a key precursor for the biosynthesis of isoprenoid compounds such as archaeal membrane lipids. This Pyrococcus furiosus (strain ATCC 43587 / DSM 3638 / JCM 8422 / Vc1) protein is Mevalonate kinase.